A 132-amino-acid polypeptide reads, in one-letter code: Small ribosomal subunit protein eS12 (132 aa).

Position 2 is an N-acetylalanine (Ala-2). Lys-129 carries the N6-succinyllysine modification.

The protein belongs to the eukaryotic ribosomal protein eS12 family. In terms of assembly, part of the small subunit (SSU) processome, composed of more than 70 proteins and the RNA chaperone small nucleolar RNA (snoRNA) U3. Subunit of the 40S ribosomal complex.

It localises to the nucleus. Its subcellular location is the nucleolus. In terms of biological role, part of the small subunit (SSU) processome, first precursor of the small eukaryotic ribosomal subunit. During the assembly of the SSU processome in the nucleolus, many ribosome biogenesis factors, an RNA chaperone and ribosomal proteins associate with the nascent pre-rRNA and work in concert to generate RNA folding, modifications, rearrangements and cleavage as well as targeted degradation of pre-ribosomal RNA by the RNA exosome. Subunit of the 40S ribosomal complex. The protein is Small ribosomal subunit protein eS12 (Rps12) of Mus musculus (Mouse).